A 1128-amino-acid polypeptide reads, in one-letter code: Major DNA-binding protein (1128 aa).

Residues 1104–1128 (LGGGGQGSGGRRKRRLATVLPGLEV) are required for nuclear localization.

This sequence belongs to the herpesviridae major DNA-binding protein family. In terms of assembly, homooligomers. Forms double-helical filaments necessary for the formation of replication compartments within the host nucleus. Interacts with the origin-binding protein. Interacts with the helicase primase complex; this interaction stimulates primer synthesis activity of the helicase-primase complex. Interacts with the DNA polymerase. Interacts with the alkaline exonuclease; this interaction increases its nuclease processivity.

It localises to the virion tegument. It is found in the host nucleus. Plays several crucial roles in viral infection. Participates in the opening of the viral DNA origin to initiate replication by interacting with the origin-binding protein. May disrupt loops, hairpins and other secondary structures present on ssDNA to reduce and eliminate pausing of viral DNA polymerase at specific sites during elongation. Promotes viral DNA recombination by performing strand-transfer, characterized by the ability to transfer a DNA strand from a linear duplex to a complementary single-stranded DNA circle. Can also catalyze the renaturation of complementary single strands. Additionally, reorganizes the host cell nucleus, leading to the formation of prereplicative sites and replication compartments. This process is driven by the protein which can form double-helical filaments in the absence of DNA. This is Major DNA-binding protein from Epstein-Barr virus (strain GD1) (HHV-4).